A 176-amino-acid polypeptide reads, in one-letter code: Large ribosomal subunit protein uL6 (176 aa).

Belongs to the universal ribosomal protein uL6 family. As to quaternary structure, part of the 50S ribosomal subunit.

Functionally, this protein binds to the 23S rRNA, and is important in its secondary structure. It is located near the subunit interface in the base of the L7/L12 stalk, and near the tRNA binding site of the peptidyltransferase center. The chain is Large ribosomal subunit protein uL6 from Burkholderia mallei (strain NCTC 10247).